Consider the following 66-residue polypeptide: Large ribosomal subunit protein uL29 (66 aa).

Belongs to the universal ribosomal protein uL29 family.

The protein is Large ribosomal subunit protein uL29 of Bartonella henselae (strain ATCC 49882 / DSM 28221 / CCUG 30454 / Houston 1) (Rochalimaea henselae).